The primary structure comprises 341 residues: uncharacterized protein (341 aa).

Catalysis depends on residues S111, D247, and H275.

This sequence belongs to the DmpD/TodF/XylF esterase family.

This is an uncharacterized protein from Mycobacterium bovis (strain ATCC BAA-935 / AF2122/97).